Consider the following 387-residue polypeptide: GTP-binding protein 10 (387 aa).

In terms of domain architecture, Obg spans 13 to 148 (GNFIDNLRLF…RVIHLDLKLI (136 aa)). The OBG-type G domain maps to 149–344 (ADIGLVGFPN…LKNCIRKSLD (196 aa)). Residues 155 to 162 (GFPNAGKS), 202 to 206 (DLPGL), and 278 to 281 (NKMD) each bind GTP.

Belongs to the TRAFAC class OBG-HflX-like GTPase superfamily. OBG GTPase family.

Its subcellular location is the nucleus. It is found in the nucleolus. In terms of biological role, may be involved in the ribosome maturation process. This chain is GTP-binding protein 10 (GTPBP10), found in Bos taurus (Bovine).